The sequence spans 101 residues: MYAIVKTGGKQYKVAEGDLVKVEKIEGEPGSSVALTPVLLVDGATVKSKAADLEKVSVSAEIVEQGKGPKIDILKYKNKTGYKRRLGHRQPVTTLKITGIK.

It belongs to the bacterial ribosomal protein bL21 family. As to quaternary structure, part of the 50S ribosomal subunit. Contacts protein L20.

Its function is as follows. This protein binds to 23S rRNA in the presence of protein L20. The chain is Large ribosomal subunit protein bL21 from Corynebacterium aurimucosum (strain ATCC 700975 / DSM 44827 / CIP 107346 / CN-1) (Corynebacterium nigricans).